The following is a 321-amino-acid chain: Meiotic drive suppressor wtf26 (321 aa).

Residues 29–68 are disordered; the sequence is GLLPEYNSEEEGALPTYSDHARSSNPPNTHRENHSSGTTD. The next 6 helical transmembrane spans lie at 73–93, 110–130, 151–171, 188–208, 210–230, and 243–263; these read FLIKLLISFTPIVLLNALAVC, WTLFGFWCLVCTLALIILTYF, EMMIIIWILWLIICCILFGCV, TISAVLFLIVSSVCIPMWTLW, ALSGMLQVLGIHGIIALLVNG, and GYEIEGFVLFFTGNALFLYEM.

It belongs to the WTF family. In terms of assembly, homomer. Interacts with other proteins that exhibit high sequence similarity.

The protein localises to the spore membrane. The protein resides in the vacuole membrane. In terms of biological role, acts as a suppressor component of the dual wtf meiotic drive system, and can suppress but not confer meiotic drive by compatible poisons. Wtf meiotic drive systems promote unequal transmission of alleles from the parental zygote to progeny spores by encoding a poison and an antidote from the same locus; the poison is trans-acting and forms toxic aggregates in all spores within an ascus, wherease the antidote is spore-specific and targets aggregates for degradation by the vacuole. Meiotic drive by wtf systems therefore lead to poisoning of all progeny that do not inherit the dual poison/antidote allele, or express a compatible antidote. The sequence is that of Meiotic drive suppressor wtf26 from Schizosaccharomyces kambucha (Fission yeast).